The sequence spans 165 residues: Sulfopyruvate decarboxylase subunit alpha (165 aa).

It belongs to the ComD family. As to quaternary structure, heterododecamer composed of 6 subunits alpha and 6 subunits beta.

It catalyses the reaction 3-sulfopyruvate + H(+) = sulfoacetaldehyde + CO2. It functions in the pathway cofactor biosynthesis; coenzyme M biosynthesis; sulfoacetaldehyde from phosphoenolpyruvate and sulfite: step 4/4. Its function is as follows. Involved in the biosynthesis of the coenzyme M (2-mercaptoethanesulfonic acid). Catalyzes the decarboxylation of sulfopyruvate to sulfoacetaldehyde. This Methanothermobacter thermautotrophicus (strain ATCC 29096 / DSM 1053 / JCM 10044 / NBRC 100330 / Delta H) (Methanobacterium thermoautotrophicum) protein is Sulfopyruvate decarboxylase subunit alpha.